The following is a 684-amino-acid chain: uncharacterized protein (684 aa).

In terms of domain architecture, Helicase ATP-binding spans 54–239 (LKYLYNKKDV…LLFNRDFEVV (186 aa)). 67–74 (TSTASGKS) is an ATP binding site. The short motif at 181–184 (DELH) is the DEVH box element. In terms of domain architecture, Helicase C-terminal spans 264–419 (LLRRLIENLV…YMPVNIKNRF (156 aa)).

It belongs to the helicase family.

This is an uncharacterized protein from Methanocaldococcus jannaschii (strain ATCC 43067 / DSM 2661 / JAL-1 / JCM 10045 / NBRC 100440) (Methanococcus jannaschii).